The primary structure comprises 524 residues: Cytochrome P450 monooxygenase ankB (524 aa).

The helical transmembrane segment at 22-42 (FHALSIQAPGLLLGTLLFYLF) threads the bilayer. Cys-466 is a binding site for heme.

Belongs to the cytochrome P450 family. It depends on heme as a cofactor.

Its subcellular location is the membrane. It catalyses the reaction cyclo(L-arginyl-tyrosyl) + reduced [NADPH--hemoprotein reductase] + O2 = cyclo(L-arginyl-L-dehydrotyrosyl) + oxidized [NADPH--hemoprotein reductase] + 2 H2O + H(+). Its pathway is alkaloid biosynthesis. Cytochrome P450 monooxygenase; part of the ank cluster that mediates the biosynthesis of NK13650 C, a highly modified cyclo-arginine-tyrosine dipeptide. AnkB is responsible for desaturation of the ankA product cyclo-Arg-Tyr diketopiperazine, likely through hydroxylation of the benzylic position followed by dehydration to yield a dehydro-cyclodipeptide. Within the pathway, the cyclodipeptide synthase ankA acts as the scaffold-generating enzyme and is responsible for formation of the cyclo-Arg-Tyr diketopiperazine (cRY) from L-Arg and L-Tyr. The ankA product cRY is desaturated by the cytochrome P450 monooxygenase ankB to yield a dehydro-cyclodipeptide intermediate. The FAD-dependent monooxygenase ankC then installs the m-OH, ankD catalyzes the attachment of L-homoserine, and ankE ligates citrate to the ankD product to yield NK13650 B. The O-methyltransferase ankF is responsible for methylation of the C-17 phenol group of NK13650 B to produce NK13650 D. Amidation of NK13650 D with L-Asp by ankG then leads to the production of NK13650 C, whereas amidation of NK13650 B produces NK13650 A. In Aspergillus thermomutatus (Neosartorya pseudofischeri), this protein is Cytochrome P450 monooxygenase ankB.